A 341-amino-acid polypeptide reads, in one-letter code: Two-component response regulator ORR30 (341 aa).

The region spanning 12–127 (RVLVIDDDCS…ELSNIWQHIF (116 aa)) is the Response regulatory domain. Asp-63 bears the 4-aspartylphosphate mark. Residues 195–254 (DLGKSRLTWTTQLHRQFIAAVNHLGEDKAVPKKILGIMKVKHLTREQVASHLQKYRMQLK) enclose the HTH myb-type domain. Residues 225-250 (PKKILGIMKVKHLTREQVASHLQKYR) constitute a DNA-binding region (H-T-H motif).

It belongs to the ARR family. Type-B subfamily. Two-component system major event consists of a His-to-Asp phosphorelay between a sensor histidine kinase (HK) and a response regulator (RR). In plants, the His-to-Asp phosphorelay involves an additional intermediate named Histidine-containing phosphotransfer protein (HPt). This multistep phosphorelay consists of a His-Asp-His-Asp sequential transfer of a phosphate group between first a His and an Asp of the HK protein, followed by the transfer to a conserved His of the HPt protein and finally the transfer to an Asp in the receiver domain of the RR protein.

The protein resides in the nucleus. Its function is as follows. Transcriptional activator that acts as a floral inducer to promote short-day (SD) flowering pathway. Activates HD3A and other FT-like genes independently from HD1. May also activate MADS-box transcription factors involved in flowering regulation. Functions as a response regulator involved in His-to-Asp phosphorelay signal transduction system. Phosphorylation of the Asp residue in the receiver domain activates the ability of the protein to promote the transcription of target genes. May directly activate some type-A response regulators in response to cytokinins. In Oryza sativa subsp. japonica (Rice), this protein is Two-component response regulator ORR30.